A 270-amino-acid polypeptide reads, in one-letter code: tRNA pseudouridine synthase A (270 aa).

The active-site Nucleophile is the Asp60. The segment at 107–111 (FHARF) is RNA binding. Substrate is bound at residue Tyr118. Positions 168–172 (QCQSR) are interaction with tRNA.

The protein belongs to the tRNA pseudouridine synthase TruA family. In terms of assembly, homodimer.

It carries out the reaction uridine(38/39/40) in tRNA = pseudouridine(38/39/40) in tRNA. Functionally, formation of pseudouridine at positions 38, 39 and 40 in the anticodon stem and loop of transfer RNAs. This Escherichia coli (strain K12 / DH10B) protein is tRNA pseudouridine synthase A.